The primary structure comprises 178 residues: Inorganic pyrophosphatase (178 aa).

Lys-30, Arg-44, and Tyr-56 together coordinate substrate. Mg(2+) is bound by residues Asp-66, Asp-71, and Asp-103. Tyr-140 serves as a coordination point for substrate.

Belongs to the PPase family. Homohexamer. The cofactor is Mg(2+).

The protein resides in the cytoplasm. The enzyme catalyses diphosphate + H2O = 2 phosphate + H(+). Its function is as follows. Catalyzes the hydrolysis of inorganic pyrophosphate (PPi) forming two phosphate ions. This is Inorganic pyrophosphatase from Pyrococcus furiosus (strain ATCC 43587 / DSM 3638 / JCM 8422 / Vc1).